Here is a 380-residue protein sequence, read N- to C-terminus: Putative glutamate--cysteine ligase 2 (380 aa).

It belongs to the glutamate--cysteine ligase type 2 family. YbdK subfamily.

The enzyme catalyses L-cysteine + L-glutamate + ATP = gamma-L-glutamyl-L-cysteine + ADP + phosphate + H(+). Its function is as follows. ATP-dependent carboxylate-amine ligase which exhibits weak glutamate--cysteine ligase activity. In Pseudomonas entomophila (strain L48), this protein is Putative glutamate--cysteine ligase 2.